A 203-amino-acid chain; its full sequence is Formate hydrogenlyase subunit 2 (203 aa).

4Fe-4S ferredoxin-type domains follow at residues 2–32 (NRFVIADSTLCIGCHTCEAACSETHRQHGLQ), 42–72 (NEKESAPQLCHHCEDAPCAVVCPVNAITRVD), 73–102 (GAVQLNESLCVSCKLCGIACPFGAIEFSGS), and 137–169 (RAIAVKCDLCSFDEQGPACVRMCPTKALHLVDN). Residues cysteine 12, cysteine 15, cysteine 18, cysteine 22, cysteine 51, cysteine 54, cysteine 59, cysteine 63, cysteine 82, cysteine 85, cysteine 88, cysteine 92, cysteine 143, cysteine 146, cysteine 155, and cysteine 159 each coordinate [4Fe-4S] cluster.

In terms of assembly, FHL comprises of a formate dehydrogenase, unidentified electron carriers and a hydrogenase (isoenzyme 3). In this non-energy conserving pathway, molecular hydrogen and carbodioxide are released from formate. Requires [4Fe-4S] cluster as cofactor.

Its function is as follows. Probable electron transfer protein for hydrogenase 3. The chain is Formate hydrogenlyase subunit 2 (hycB) from Escherichia coli (strain K12).